The primary structure comprises 831 residues: Multiphosphoryl transfer protein 1 (831 aa).

Residues 1-90 (MLTIQFLCPL…EYIQVRFIDS (90 aa)) form the HPr domain. The active-site Pros-phosphohistidine intermediate; for HPr activity is histidine 15. Residue histidine 15 is modified to Phosphohistidine; by EI. The tract at residues 119–650 (GNVLASGVGV…AVKSQLRQLD (532 aa)) is PTS EI. Histidine 298 serves as the catalytic Tele-phosphohistidine intermediate; for PTS EI activity. Histidine 298 bears the Phosphohistidine; by autocatalysis mark. Phosphoenolpyruvate-binding residues include arginine 405 and arginine 441. Residues glutamate 540 and aspartate 564 each coordinate Mg(2+). Phosphoenolpyruvate contacts are provided by residues 563–564 (ND) and arginine 574. Catalysis depends on cysteine 611, which acts as the Proton donor; for EI activity. In terms of domain architecture, PTS EIIA type-2 spans 685 to 828 (PLLALENIFV…QSILTLLETE (144 aa)). Residue histidine 747 is the Tele-phosphohistidine intermediate; for PTS EIIA activity of the active site. Position 747 is a phosphohistidine; by HPr (histidine 747).

This sequence belongs to the PEP-utilizing enzyme family. It depends on Mg(2+) as a cofactor.

The protein localises to the cytoplasm. It catalyses the reaction L-histidyl-[protein] + phosphoenolpyruvate = N(pros)-phospho-L-histidyl-[protein] + pyruvate. The enzyme catalyses D-fructose(out) + N(pros)-phospho-L-histidyl-[protein] = D-fructose 1-phosphate(in) + L-histidyl-[protein]. Multifunctional protein that includes general (non sugar-specific) and sugar-specific components of the phosphoenolpyruvate-dependent sugar phosphotransferase system (sugar PTS). This major carbohydrate active transport system catalyzes the phosphorylation of incoming sugar substrates concomitantly with their translocation across the cell membrane. The enzyme II FryABC PTS system is involved in fructose transport. The polypeptide is Multiphosphoryl transfer protein 1 (fryA) (Escherichia coli (strain K12)).